The chain runs to 155 residues: DNA gyrase inhibitor (155 aa).

It belongs to the DNA gyrase inhibitor family. As to quaternary structure, interacts with DNA gyrase.

Its subcellular location is the cytoplasm. In terms of biological role, inhibits the supercoiling activity of DNA gyrase. Acts by inhibiting DNA gyrase at an early step, prior to (or at the step of) binding of DNA by the gyrase. It protects cells against toxins that target DNA gyrase, by inhibiting activity of these toxins and reducing the formation of lethal double-strand breaks in the cell. The sequence is that of DNA gyrase inhibitor from Escherichia fergusonii (strain ATCC 35469 / DSM 13698 / CCUG 18766 / IAM 14443 / JCM 21226 / LMG 7866 / NBRC 102419 / NCTC 12128 / CDC 0568-73).